A 642-amino-acid chain; its full sequence is G protein-coupled receptor kinase 1 (642 aa).

An N-terminal region spans residues 1–202 (MEIENIVANT…LEKRPVDKHT (202 aa)). One can recognise an RGS domain in the interval 52–188 (YAFVVEKQPI…AESMYFHRFL (137 aa)). Residues 203–470 (FRLYRVLGKG…AEEIRAHPFF (268 aa)) enclose the Protein kinase domain. Residues 209 to 217 (LGKGGFGEV) and Lys-232 each bind ATP. Catalysis depends on Asp-328, which acts as the Proton acceptor. The region spanning 480–545 (EPVPWKKMEA…GCVSIPWQSE (66 aa)) is the AGC-kinase C-terminal domain. The segment at 612–642 (VEQQQPPKTSTQTPAVRSSRAASASGRTLVI) is disordered. The segment covering 614–636 (QQQPPKTSTQTPAVRSSRAASAS) has biased composition (low complexity).

Belongs to the protein kinase superfamily. AGC Ser/Thr protein kinase family. GPRK subfamily.

It carries out the reaction [G-protein-coupled receptor] + ATP = [G-protein-coupled receptor]-phosphate + ADP + H(+). Its function is as follows. Specifically phosphorylates the activated forms of G protein-coupled receptors. In Caenorhabditis elegans, this protein is G protein-coupled receptor kinase 1 (grk-1).